The sequence spans 173 residues: Macro domain-containing protein in gbd 3'region (173 aa).

A Macro domain is found at Met-1–Ser-173.

This sequence belongs to the MacroD-type family.

In Cupriavidus necator (Alcaligenes eutrophus), this protein is Macro domain-containing protein in gbd 3'region.